The chain runs to 358 residues: Testis-specific serine/threonine-protein kinase 2 (358 aa).

The Protein kinase domain occupies 12–272 (YIVGINLGKG…IDEILSHSWL (261 aa)). Residues 18–26 (LGKGSYAKV) and Lys-41 contribute to the ATP site. Catalysis depends on Asp-136, which acts as the Proton acceptor. Basic and acidic residues-rich tracts occupy residues 296-315 (DCKL…DHKL) and 329-358 (NEDR…KAST). Residues 296–358 (DCKLDTRPGS…SGAEVEKAST (63 aa)) are disordered.

Belongs to the protein kinase superfamily. CAMK Ser/Thr protein kinase family. In terms of assembly, interacts with TSSK1B. Interacts with HSP90; this interaction stabilizes TSSK2. The cofactor is Mg(2+). Post-translationally, autophosphorylated. In terms of processing, ubiquitinated; HSP90 activity negatively regulates ubiquitination and degradation. Testis-specific. Expressed only in the spermatids postmeiotically at the final stages of cytodifferentiation in the seminiferous tubules (at protein level). Not detected in released sperms in the lumen of the seminiferous tubules. Also present in the epididymal sperm (at protein level).

It is found in the cytoplasm. The protein resides in the cytoskeleton. It localises to the microtubule organizing center. The protein localises to the centrosome. Its subcellular location is the centriole. It is found in the cytoplasmic vesicle. The protein resides in the secretory vesicle. It localises to the acrosome. The enzyme catalyses L-seryl-[protein] + ATP = O-phospho-L-seryl-[protein] + ADP + H(+). It catalyses the reaction L-threonyl-[protein] + ATP = O-phospho-L-threonyl-[protein] + ADP + H(+). Its activity is regulated as follows. Activated by phosphorylation on Thr-174, potentially by autophosphorylation. Functionally, testis-specific serine/threonine-protein kinase required during spermatid development. Phosphorylates 'Ser-281' of TSKS and SPAG16. Involved in the late stages of spermatogenesis, during the reconstruction of the cytoplasm. During spermatogenesis, required for the transformation of a ring-shaped structure around the base of the flagellum originating from the chromatoid body. The sequence is that of Testis-specific serine/threonine-protein kinase 2 (Tssk2) from Mus musculus (Mouse).